A 293-amino-acid polypeptide reads, in one-letter code: ATP synthase gamma chain (293 aa).

It belongs to the ATPase gamma chain family. As to quaternary structure, F-type ATPases have 2 components, CF(1) - the catalytic core - and CF(0) - the membrane proton channel. CF(1) has five subunits: alpha(3), beta(3), gamma(1), delta(1), epsilon(1). CF(0) has three main subunits: a, b and c.

It localises to the cell inner membrane. Its function is as follows. Produces ATP from ADP in the presence of a proton gradient across the membrane. The gamma chain is believed to be important in regulating ATPase activity and the flow of protons through the CF(0) complex. The chain is ATP synthase gamma chain from Nitratidesulfovibrio vulgaris (strain DSM 19637 / Miyazaki F) (Desulfovibrio vulgaris).